The primary structure comprises 1041 residues: Importin-9 (1041 aa).

A2 carries the post-translational modification N-acetylalanine. An Importin N-terminal domain is found at 43–119 (AEEQIKVLEV…RELLPNGLRE (77 aa)). Residues 936–967 (QATPAEWNQDDSNDMWEDQEEEEEEEEDGLAG) are disordered. The span at 943 to 964 (NQDDSNDMWEDQEEEEEEEEDG) shows a compositional bias: acidic residues.

It belongs to the importin beta family. Interacts with histones H2A, H2B, H3 and H4. The binding is coupled to RanGTP cycles. Interacts with AKIRIN2; promoting association with pre-assembled proteasomes. Associates with pre-assembled proteasomes; interaction is indirect and mediated via interaction with AKIRIN2. Interacts with PPP2R1A and PPP2R1B.

It is found in the cytoplasm. It localises to the nucleus. Its function is as follows. Nuclear transport receptor that mediates nuclear import of proteins, such as histones, proteasome and actin. Serves as receptor for nuclear localization signals (NLS) in cargo substrates. Is thought to mediate docking of the importin/substrate complex to the nuclear pore complex (NPC) through binding to nucleoporin and the complex is subsequently translocated through the pore by an energy requiring, Ran-dependent mechanism. At the nucleoplasmic side of the NPC, Ran binds to the importin, the importin/substrate complex dissociates and importin is re-exported from the nucleus to the cytoplasm where GTP hydrolysis releases Ran. The directionality of nuclear import is thought to be conferred by an asymmetric distribution of the GTP- and GDP-bound forms of Ran between the cytoplasm and nucleus. Mediates the import of pre-assembled proteasomes into the nucleus; AKIRIN2 acts as a molecular bridge between IPO9 and the proteasome complex. Mediates the nuclear import of histones H2A, H2B, H4 and H4. In addition to nuclear import, also acts as a chaperone for histones by preventing inappropriate non-nucleosomal interactions. Mediates the nuclear import of actin. The sequence is that of Importin-9 from Mus musculus (Mouse).